A 130-amino-acid polypeptide reads, in one-letter code: Small ribosomal subunit protein uS9 (130 aa).

The disordered stretch occupies residues 105–130 (TRDSRMKERKKPGLRGARRAPQFSKR). The span at 111–130 (KERKKPGLRGARRAPQFSKR) shows a compositional bias: basic residues.

The protein belongs to the universal ribosomal protein uS9 family.

The polypeptide is Small ribosomal subunit protein uS9 (Lysinibacillus sphaericus (strain C3-41)).